The chain runs to 429 residues: Serine hydroxymethyltransferase (429 aa).

Residues Leu-128 and 132–134 each bind (6S)-5,6,7,8-tetrahydrofolate; that span reads GHL. Lys-237 carries the post-translational modification N6-(pyridoxal phosphate)lysine.

This sequence belongs to the SHMT family. In terms of assembly, homodimer. Requires pyridoxal 5'-phosphate as cofactor.

It is found in the cytoplasm. It catalyses the reaction (6R)-5,10-methylene-5,6,7,8-tetrahydrofolate + glycine + H2O = (6S)-5,6,7,8-tetrahydrofolate + L-serine. The protein operates within one-carbon metabolism; tetrahydrofolate interconversion. It functions in the pathway amino-acid biosynthesis; glycine biosynthesis; glycine from L-serine: step 1/1. Its function is as follows. Catalyzes the reversible interconversion of serine and glycine with tetrahydrofolate (THF) serving as the one-carbon carrier. This reaction serves as the major source of one-carbon groups required for the biosynthesis of purines, thymidylate, methionine, and other important biomolecules. Also exhibits THF-independent aldolase activity toward beta-hydroxyamino acids, producing glycine and aldehydes, via a retro-aldol mechanism. In Caulobacter vibrioides (strain ATCC 19089 / CIP 103742 / CB 15) (Caulobacter crescentus), this protein is Serine hydroxymethyltransferase.